A 62-amino-acid polypeptide reads, in one-letter code: Small ribosomal subunit protein eS27 (62 aa).

Zn(2+) contacts are provided by Cys-17, Cys-20, Cys-36, and Cys-39. The C4-type zinc-finger motif lies at 17-39 (CPDCENEQVVFERASTVVECTVC).

This sequence belongs to the eukaryotic ribosomal protein eS27 family. As to quaternary structure, part of the 30S ribosomal subunit. Zn(2+) serves as cofactor.

This is Small ribosomal subunit protein eS27 from Methanoculleus marisnigri (strain ATCC 35101 / DSM 1498 / JR1).